Reading from the N-terminus, the 477-residue chain is Glutamate--tRNA ligase (477 aa).

The 'HIGH' region signature appears at 18–28 (PSPTGFIHLGN). Residues 128 to 138 (PRYDGSWRPEP) show a composition bias toward basic and acidic residues. Residues 128–151 (PRYDGSWRPEPGKTLPPVPAGMSP) are disordered. The 'KMSKS' region signature appears at 250–254 (KLSKR). Lys-253 contacts ATP.

It belongs to the class-I aminoacyl-tRNA synthetase family. Glutamate--tRNA ligase type 1 subfamily. As to quaternary structure, monomer.

The protein resides in the cytoplasm. The enzyme catalyses tRNA(Glu) + L-glutamate + ATP = L-glutamyl-tRNA(Glu) + AMP + diphosphate. Catalyzes the attachment of glutamate to tRNA(Glu) in a two-step reaction: glutamate is first activated by ATP to form Glu-AMP and then transferred to the acceptor end of tRNA(Glu). In Verminephrobacter eiseniae (strain EF01-2), this protein is Glutamate--tRNA ligase.